Here is a 589-residue protein sequence, read N- to C-terminus: MQDLCEMWRHAVARVLSQLQGPAVEPVEGAQLVMEEPPEPGMGDIAFPLFLFAKRVRRSPAQLAQQLCTLLEEDTSMCAYGTPQARGPYLNVFLNKECVAAHTLDAIFAQGERYGHTQYLQGKRIMVEFSSPNTNKPLHVGHLRNNAIGESLSRIIAFCGADVFKVNIINDRGVHICKSMCAYQKFAHGKTPAHTGIKSDRFVGDWYVQFNRYAQQYPEEAEHDVRDLLQRWESADPHVRALWRTMNEWALRGIKQTYERTGISFDKLYFESETYTKGREEVRRGLACGVFYQMEDNSIWVDLSSLGLDKKALLRSDGTTMYITQDIGTAIFRAQDWPFDQLLYVVGNEQNYHFKVLFFVLRLLGYPWAQQLHHVSYGMVNLPHGRMKSREGTVVDADDILDRLHSAAEEEIAKKGRENALKHAQCIAENVAIAALHYFLLQVSPQKDMVFHPEESLSFNGNTGPYLQYMGARISSLLKKVQEDVEQKGPREVRCDPALLTHEAEWELVKALARFPACVTRAAQGHDPSVITGYLYTLSKSFSRFYHDCPILCEARPDYACARLELVRAVRIVLRTAMRLVLIPFLEEM.

The short motif at 132 to 142 (PNTNKPLHVGH) is the 'HIGH' region element.

It belongs to the class-I aminoacyl-tRNA synthetase family. In terms of assembly, monomer.

Its subcellular location is the cytoplasm. It catalyses the reaction tRNA(Arg) + L-arginine + ATP = L-arginyl-tRNA(Arg) + AMP + diphosphate. The protein is Arginine--tRNA ligase of Treponema pallidum subsp. pallidum (strain SS14).